A 356-amino-acid polypeptide reads, in one-letter code: MFEAIIYNISVTVAGIYLFHRLQYSENRIMVFSKEYVTVLMTIVALLLSAYPVPIFNEYTLYLSFVPILFLGRYTNMFYTVLSAFIVGLVNVLIGDYTIITAMIFIVIAGIIGAIGPFLKQSDIISLQILNVIALVIFAILSLISPYYEITEVLFLIPISFVLTITSSITFVDIWHFFSLVNRYENEDKVDYLTGLGNVKEFDRHLNETARLSEENNQSLGLLLIDIDGFKDVNDMYSHKSGDAVLRQVAQLLKNYVPQQFSIYRNGGEEFSIVLYDYTLDQCVKLSESIRGGVEQSTFHLPNKEVIKLSVSIGVGYLTTDDYKSQRKVFKIADDMLHMAKNEGRNQVMFNPIVKL.

The next 6 helical transmembrane spans lie at 2 to 22 (FEAI…FHRL), 36 to 56 (YVTV…VPIF), 77 to 97 (MFYT…IGDY), 99 to 119 (IITA…GPFL), 124 to 144 (IISL…LSLI), and 154 to 174 (LFLI…FVDI). The region spanning 218-353 (QSLGLLLIDI…GRNQVMFNPI (136 aa)) is the GGDEF domain.

Its subcellular location is the cell membrane. This is an uncharacterized protein from Staphylococcus saprophyticus subsp. saprophyticus (strain ATCC 15305 / DSM 20229 / NCIMB 8711 / NCTC 7292 / S-41).